Here is a 161-residue protein sequence, read N- to C-terminus: Small ribosomal subunit protein uS9 (161 aa).

Positions 1–38 (MAQTITSLADLKQGPGAEPAGLSAEPQEPKLDKEGRAY) are disordered. Residues 27–38 (QEPKLDKEGRAY) are compositionally biased toward basic and acidic residues.

The protein belongs to the universal ribosomal protein uS9 family.

The protein is Small ribosomal subunit protein uS9 of Rhodospirillum centenum (strain ATCC 51521 / SW).